A 215-amino-acid chain; its full sequence is MDTTDRTAEVVLVDYGLGNLRSVTRGLERAGAEVTLSADPDDFSAADGIVLPGVGAFSEGMENAGPFREALVAAAADGQPLFGICLGMQMLLTSSEEAETVGQGDVRGLDLVPGRNVRFDEGQKVPHMGWNELNVARDHPIVEGIDGEYAYFVHSYYAAPDDDAAVVATTDYSVEFPAIVANEAGNVFGTQFHPEKSGETGLQILQNFVDYCLER.

The 207-residue stretch at 9–215 (EVVLVDYGLG…QNFVDYCLER (207 aa)) folds into the Glutamine amidotransferase type-1 domain. Cys85 functions as the Nucleophile in the catalytic mechanism. Residues His193 and Glu195 contribute to the active site.

Heterodimer of HisH and HisF.

The protein localises to the cytoplasm. The enzyme catalyses 5-[(5-phospho-1-deoxy-D-ribulos-1-ylimino)methylamino]-1-(5-phospho-beta-D-ribosyl)imidazole-4-carboxamide + L-glutamine = D-erythro-1-(imidazol-4-yl)glycerol 3-phosphate + 5-amino-1-(5-phospho-beta-D-ribosyl)imidazole-4-carboxamide + L-glutamate + H(+). It catalyses the reaction L-glutamine + H2O = L-glutamate + NH4(+). Its pathway is amino-acid biosynthesis; L-histidine biosynthesis; L-histidine from 5-phospho-alpha-D-ribose 1-diphosphate: step 5/9. In terms of biological role, IGPS catalyzes the conversion of PRFAR and glutamine to IGP, AICAR and glutamate. The HisH subunit catalyzes the hydrolysis of glutamine to glutamate and ammonia as part of the synthesis of IGP and AICAR. The resulting ammonia molecule is channeled to the active site of HisF. The chain is Imidazole glycerol phosphate synthase subunit HisH from Natronomonas pharaonis (strain ATCC 35678 / DSM 2160 / CIP 103997 / JCM 8858 / NBRC 14720 / NCIMB 2260 / Gabara) (Halobacterium pharaonis).